A 453-amino-acid polypeptide reads, in one-letter code: Serine/threonine-protein phosphatase 2A regulatory subunit B'' subunit gamma (453 aa).

EF-hand domains are found at residues 273–308 (PSALRVYGQYLNLDKDHNGMLSKEELSRYGTATMTN) and 341–376 (KEPAALQYIFKLLDIENKGYLNVFSLNYFFRAIQEL). Ca(2+) is bound by residues aspartate 286, aspartate 288, asparagine 290, methionine 292, and glutamate 297.

In terms of assembly, interacts with MCM3AP/GANP, PPP5C, and the phosphatase 2A core enzyme composed of the PPP2CA catalytic subunit and the constant regulatory subunit PPP2R1A. Finds in a complex with ABCB1, TFPI2 and PPP2R3C; leading to the dephosphorylation of ABCB1.

It is found in the nucleus. The protein localises to the cytoplasm. Functionally, may regulate MCM3AP phosphorylation through phosphatase recruitment. May act as a negative regulator of ABCB1 expression and function through the dephosphorylation of ABCB1 by TFPI2/PPP2R3C complex. May play a role in the activation-induced cell death of B-cells. The chain is Serine/threonine-protein phosphatase 2A regulatory subunit B'' subunit gamma (PPP2R3C) from Bos taurus (Bovine).